The chain runs to 483 residues: Glutamyl-tRNA(Gln) amidotransferase subunit A (483 aa).

Catalysis depends on charge relay system residues lysine 76 and serine 151. The active-site Acyl-ester intermediate is the serine 175.

Belongs to the amidase family. GatA subfamily. As to quaternary structure, heterotrimer of A, B and C subunits.

The enzyme catalyses L-glutamyl-tRNA(Gln) + L-glutamine + ATP + H2O = L-glutaminyl-tRNA(Gln) + L-glutamate + ADP + phosphate + H(+). Functionally, allows the formation of correctly charged Gln-tRNA(Gln) through the transamidation of misacylated Glu-tRNA(Gln) in organisms which lack glutaminyl-tRNA synthetase. The reaction takes place in the presence of glutamine and ATP through an activated gamma-phospho-Glu-tRNA(Gln). The chain is Glutamyl-tRNA(Gln) amidotransferase subunit A from Chromobacterium violaceum (strain ATCC 12472 / DSM 30191 / JCM 1249 / CCUG 213 / NBRC 12614 / NCIMB 9131 / NCTC 9757 / MK).